A 291-amino-acid chain; its full sequence is 3-hydroxy-5-phosphonooxypentane-2,4-dione thiolase (291 aa).

Residue Lys203 is the Schiff-base intermediate with substrate of the active site.

This sequence belongs to the DeoC/FbaB aldolase family. As to quaternary structure, homodecamer.

The protein resides in the cytoplasm. It carries out the reaction dihydroxyacetone phosphate + acetyl-CoA = 3-hydroxy-2,4-dioxopentyl phosphate + CoA. Its function is as follows. Involved in the degradation of phospho-AI-2, thereby terminating induction of the lsr operon and closing the AI-2 signaling cycle. Catalyzes the transfer of an acetyl moiety from 3-hydroxy-5-phosphonooxypentane-2,4-dione to CoA to form glycerone phosphate and acetyl-CoA. This is 3-hydroxy-5-phosphonooxypentane-2,4-dione thiolase from Yersinia pestis bv. Antiqua (strain Antiqua).